The following is a 757-amino-acid chain: RNA-directed RNA polymerase catalytic subunit (757 aa).

A disordered region spans residues 50–82; sequence SERGRWTKNTETGAPQLNPIDGPLPEDNEPSGY. Short sequence motifs (nuclear localization signal) lie at residues 187–195 and 203–216; these read RKRRVRDNV and RTIG…NKRS. A promoter-binding site region spans residues 249-256; that stretch reads RGFVYFVE. Residues 286–483 enclose the RdRp catalytic domain; it reads VRKMMTNSQD…GINMSKKKSY (198 aa).

This sequence belongs to the influenza viruses polymerase PB1 family. In terms of assembly, influenza RNA polymerase is composed of three subunits: PB1, PB2 and PA. Interacts (via N-terminus) with PA (via C-terminus). Interacts (via C-terminus) with PB2 (via N-terminus); this interaction is essential for transcription initiation. Interacts (via C-terminus) with human PKP2 (via N-terminus); the interaction competitively inhibits the interaction between the RNA polymerase subunits PB1 and PB2. In terms of processing, phosphorylated by host PRKCA.

Its subcellular location is the host nucleus. The protein resides in the host cytoplasm. The catalysed reaction is RNA(n) + a ribonucleoside 5'-triphosphate = RNA(n+1) + diphosphate. In terms of biological role, RNA-dependent RNA polymerase which is responsible for replication and transcription of virus RNA segments. The transcription of viral mRNAs occurs by a unique mechanism called cap-snatching. 5' methylated caps of cellular mRNAs are cleaved after 10-13 nucleotides by PA. In turn, these short capped RNAs are used as primers by PB1 for transcription of viral mRNAs. During virus replication, PB1 initiates RNA synthesis and copy vRNA into complementary RNA (cRNA) which in turn serves as a template for the production of more vRNAs. This chain is RNA-directed RNA polymerase catalytic subunit, found in Influenza A virus (strain A/Beijing/11/1956 H1N1).